Here is a 25-residue protein sequence, read N- to C-terminus: Antimicrobial peptide 2 (25 aa).

As to expression, expressed by the skin glands.

It is found in the secreted. In terms of biological role, has very strong antibacterial activity against Gram-positive bacterium S.aureus and very weak activity against Gram-negative bacterium E.coli. This Xenopus tropicalis (Western clawed frog) protein is Antimicrobial peptide 2.